Here is a 372-residue protein sequence, read N- to C-terminus: MPLPDFHVSEPFTLGIELEMQVVNPPGYDLSQDSSMLIDAVKNKITAGEVKHDITESMLELATDVCRDINQAAGQFSAMQKVVLQAAADHHLEICGGGTHPFQKWQRQEVCDNERYQRTLQNFGYLIQQATVFGQHVHVGCASGDDAIYLLHGLSRFVPHFIALSAASPYMQGTDTRFASSRPNIFSAFPDNGPMPWVSNWQQFEALFRCLSYTTMIDSIKDLHWDIRPSPHFGTVEVRVMDTPLTLSHAVNMAGLIQATAHWLLTERPFKHQEKDYLLYKFNRFQACRYGLEGVITDPHTGDRRSLTEATLRLLEKITPSAHKIGASSAIEALHRQVVSGLNEAQLMRDFVADGGSLIGLVKKHCEIWAGE.

Belongs to the glutamate--cysteine ligase type 2 family. YbdK subfamily. As to quaternary structure, homodimer.

It carries out the reaction L-cysteine + L-glutamate + ATP = gamma-L-glutamyl-L-cysteine + ADP + phosphate + H(+). Functionally, ATP-dependent carboxylate-amine ligase which exhibits weak glutamate--cysteine ligase activity. This chain is Putative glutamate--cysteine ligase 2 (ybdK), found in Escherichia coli O6:H1 (strain CFT073 / ATCC 700928 / UPEC).